Consider the following 2135-residue polypeptide: Nonribosomal peptide synthetase gliP (2135 aa).

The adenylation 1 stretch occupies residues 34 to 424 (TYTELDVASS…LPADVEEPLR (391 aa)). The Carrier 1 domain occupies 519 to 594 (TEREQVIAEC…GILPYARDLA (76 aa)). Position 555 is an O-(pantetheine 4'-phosphoryl)serine (S555). The condensation 1 stretch occupies residues 663–913 (AEHICNAWRQ…MATLPLVCRI (251 aa)). An adenylation 2 region spans residues 1078–1458 (YRELDQKSNA…YQEEPRLTQA (381 aa)). Positions 1544–1622 (ASIADGIATL…EQVELVRRKR (79 aa)) constitute a Carrier 2 domain. Residue S1582 is modified to O-(pantetheine 4'-phosphoryl)serine. Residues 1642–1905 (SPLERQTWFQ…FLDRLPLRFK (264 aa)) are condensation 2. A Carrier 3 domain is found at 2061–2134 (RRLVGILQRE…DLAQRLYRQV (74 aa)). S2095 is subject to O-(pantetheine 4'-phosphoryl)serine.

The protein belongs to the NRP synthetase family.

It functions in the pathway mycotoxin biosynthesis. Its function is as follows. Nonribosomal peptide synthetase; part of the gene cluster that mediates the biosynthesis of gliotoxin, a member of the epipolythiodioxopiperazine (ETP) class of toxins characterized by a disulfide-bridged cyclic dipeptide. The first step in gliotoxin biosynthesis is the condensation of serine and phenylalanine to form the cyclo-L-phenylalanyl-L-serine diketopiperazine (DKP) by the NRPS gliP. GliP is also able to produce the DKP cyclo-L-tryptophanyl-L-serine, suggesting that the substrate specificity of the first adenylation (A) domain in gliP is sufficiently relaxed to accommodate both L-Phe and L-Trp. The cytochrome P450 monooxygenase gliC has been shown to catalyze the subsequent hydroxylation of the alpha-carbon of L-Phe in cyclo-L-phenylalanyl-L-serine whereas the second cytochrome P450 enzyme, gliF, is presumably involved in the modification of the DKP side chain. The glutathione S-transferase (GST) gliG then forms a bis-glutathionylated biosynthetic intermediate which is responsible for the sulfurization of gliotoxin. This bis-glutathionylated intermediate is subsequently processed by the gamma-glutamyl cyclotransferase gliK to remove both gamma-glutamyl moieties. Subsequent processing via gliI yields a biosynthetic intermediate, which is N-methylated via the N-methyltransferase gliN, before the gliotoxin oxidoreductase gliT-mediated disulfide bridge closure. GliN-mediated amide methylation confers stability to ETP, damping the spontaneous formation of tri- and tetrasulfides. Intracellular dithiol gliotoxin oxidized by gliT is subsequently effluxed by gliA. Gliotoxin contributes to pathogenesis during invasive aspergillosis. In macrophages and neutrophils, gliotoxin showed inhibition of various different cell functions including cytokine production, antigen presentation, phagocytosis, and production of reactive oxygen species. This Aspergillus fumigatus (strain ATCC MYA-4609 / CBS 101355 / FGSC A1100 / Af293) (Neosartorya fumigata) protein is Nonribosomal peptide synthetase gliP.